Consider the following 161-residue polypeptide: Phosphopantetheine adenylyltransferase (161 aa).

S8 is a substrate binding site. ATP-binding positions include 8–9 (SF) and H16. K40, T72, and R86 together coordinate substrate. ATP-binding positions include 87 to 89 (GLR), E97, and 122 to 128 (HSFLSSS).

This sequence belongs to the bacterial CoaD family. In terms of assembly, homohexamer. Mg(2+) is required as a cofactor.

The protein localises to the cytoplasm. The catalysed reaction is (R)-4'-phosphopantetheine + ATP + H(+) = 3'-dephospho-CoA + diphosphate. The protein operates within cofactor biosynthesis; coenzyme A biosynthesis; CoA from (R)-pantothenate: step 4/5. In terms of biological role, reversibly transfers an adenylyl group from ATP to 4'-phosphopantetheine, yielding dephospho-CoA (dPCoA) and pyrophosphate. The protein is Phosphopantetheine adenylyltransferase of Prochlorococcus marinus (strain SARG / CCMP1375 / SS120).